Here is a 178-residue protein sequence, read N- to C-terminus: Ribosome maturation factor RimM (178 aa).

The PRC barrel domain maps to 101–178; it reads ADEYYWYQLV…VMRVEWDADF (78 aa).

The protein belongs to the RimM family. Binds ribosomal protein uS19.

The protein localises to the cytoplasm. An accessory protein needed during the final step in the assembly of 30S ribosomal subunit, possibly for assembly of the head region. Essential for efficient processing of 16S rRNA. May be needed both before and after RbfA during the maturation of 16S rRNA. It has affinity for free ribosomal 30S subunits but not for 70S ribosomes. This chain is Ribosome maturation factor RimM, found in Pseudomonas putida (strain ATCC 47054 / DSM 6125 / CFBP 8728 / NCIMB 11950 / KT2440).